A 244-amino-acid chain; its full sequence is MKGKFSIALMLSACFSASASDSVHWGYEGSGDPAHWGKLSPDFSLCETGKNQSPVNIQQALNAQHDPLQLAFQSGTQQIINNGHTVQVNVSSGNTLLLDNETFALQQFHFHAPSENEIDGKQFPLEGHFVYKNADGALTVIALMFQEGAANPQLATAWQQIPAHVDQAEDVRTPIAIQALLPTSLNYYRFSGSLTTPPCSEGIRWLVLDHPVTASAEQINQFSSVMHHANNRPIQPLNGRIIIH.

An N-terminal signal peptide occupies residues 1 to 19 (MKGKFSIALMLSACFSASA). The region spanning 23 to 244 (VHWGYEGSGD…QPLNGRIIIH (222 aa)) is the Alpha-carbonic anhydrase domain. Cysteines 46 and 199 form a disulfide. His-84 functions as the Proton acceptor in the catalytic mechanism. Zn(2+)-binding residues include His-109, His-111, and His-128. 195-196 (TT) contacts substrate.

This sequence belongs to the alpha-carbonic anhydrase family. The cofactor is Zn(2+).

It is found in the periplasm. The enzyme catalyses hydrogencarbonate + H(+) = CO2 + H2O. In terms of biological role, reversible hydration of carbon dioxide. The chain is Carbonic anhydrase (cah) from Pectobacterium atrosepticum (strain SCRI 1043 / ATCC BAA-672) (Erwinia carotovora subsp. atroseptica).